A 332-amino-acid polypeptide reads, in one-letter code: Glyoxylate reductase (332 aa).

NADP(+)-binding positions include 155 to 158 and 236 to 238; these read MGRI and TSR. Active-site residues include Arg238 and Glu267. His286 serves as the catalytic Proton donor. 286 to 288 serves as a coordination point for NADP(+); the sequence is HAA.

Belongs to the D-isomer specific 2-hydroxyacid dehydrogenase family. GyaR subfamily. Homodimer.

The protein localises to the cytoplasm. The catalysed reaction is glycolate + NAD(+) = glyoxylate + NADH + H(+). This Korarchaeum cryptofilum (strain OPF8) protein is Glyoxylate reductase.